Here is a 347-residue protein sequence, read N- to C-terminus: DnaJ homolog subfamily C member 22 (347 aa).

The region spanning 4-50 is the TM2 domain; the sequence is GLLMTYTLWAVGGPAGLHHLYLGRDSHALLWMLTLGGGGLGWLWEFW. Helical transmembrane passes span 5–25, 32–52, 81–101, 105–125, 135–155, 186–206, and 218–238; these read LLMTYTLWAVGGPAGLHHLYL, LLWMLTLGGGGLGWLWEFWML, FVAQMIVGMYFGLVALISLSF, FYIVGLPLAVGLGVLLVAAVG, LGAAFLTSPIFYGRPIAILPI, GLAYLAFTGPLVHSVLCHTAV, and FLSWFSFFPLLGRLLESVLLL. Positions 277–347 constitute a J domain; sequence LALQVFGLSE…GSWRWEETSF (71 aa).

Its subcellular location is the membrane. Its function is as follows. May function as a co-chaperone. This is DnaJ homolog subfamily C member 22 (DNAJC22) from Bos taurus (Bovine).